The sequence spans 1312 residues: MKHEKQQRFSIRKYAVGAASVLIGFAFQAQTVAADGVTPTTTENQPTIHTVSDSPQSSENRTEETPKAVLQPEAPKTVETETPATDKVASLPKTEEKPQEEVSSTPSDKAEVVTPTSAEKETANKKAEEASPKKEEAKEVDSKESNTDKTDKDKPAKKDEAKAEADKPATEAGKERAATVNEKLAKKKIVSIDAGRKYFSPEQLKEIIDKAKHYGYTDLHLLVGNDGLRFMLDDMSITANGKTYASDDVKRAIEKGTNDYYNDPNGNHLTESQMTDLINYAKDKGIGLIPTVNSPGHMDAILNAMKELGIQNPNFSYFGKKSARTVDLDNEQAVAFTKALIDKYAAYFAKKTEIFNIGLDEYANDATDAKGWSVLQADKYYPNEGYPVKGYEKFIAYANDLARIVKSHGLKPMAFNDGIYYNSDTSFGSFDKDIIVSMWTGGWGGYDVASSKLLAEKGHQILNTNDAWYYVLGRNADGQGWYNLDQGLNGIKNTPITSVPKTEGADIPIIGGMVAAWADTPSARYSPSRLFKLMRHFANANAEYFAADYESAEQALNEVPKDLNRYTAESVTAVKEAEKAIRSLDSNLSRAQQDTIDQAIAKLQETVNNLTLTPEAQKEEEAKREVEKLAKNKVISIDAGRKYFTLNQLKRIVDKASELGYSDVHLLLGNDGLRFLLDDMTITANGKTYASDDVKKAIIEGTKAYYDDPNGTALTQAEVTELIEYAKSKDIGLIPAINSPGHMDAMLVAMEKLGIKNPQAHFDKVSKTTMDLKNEEAMNFVKALIGKYMDFFAGKTKIFNFGTDEYANDATSAQGWYYLKWYQLYGKFAEYANTLAAMAKERGLQPMAFNDGFYYEDKDDVQFDKDVLISYWSKGWWGYNLASPQYLASKGYKFLNTNGDWYYILGQKPEDGGGFLKKAIENTGKTPFNQLASTKYPEVDLPTVGSMLSIWADRPSAEYKEEEIFELMTAFADHNKDYFRANYNALREELAKIPTNLEGYSKESLEALDAAKTALNYNLNRNKQAELDTLVANLKAALQGLKPAVTHSGSLDENEVAANVETRPELITRTEEIPFEVIKKENPNLPAGQENIITAGVKGERTHYISVLTENGKTTETVLDSQVTKEVINQVVEVGAPVTHKGDESGLAPTTEVKPRLDIQEEEIPFTTVTCENPLLLKGKTQVITKGVNGHRSNFYSVSTSADGKEVKTLVNSVVAQEAVTQIVEVGTMVTHVGDENGQAAIAEEKPKLEIPSQPAPSTAPAEESKVLPQDPAPVVTEKKLPETGTHDSAGLVVAGLMSTLAAYGLTKRKED.

The signal sequence occupies residues 1–33; sequence MKHEKQQRFSIRKYAVGAASVLIGFAFQAQTVA. A compositionally biased stretch (polar residues) spans 38–59; that stretch reads TPTTTENQPTIHTVSDSPQSSE. The segment at 38–178 is disordered; the sequence is TPTTTENQPT…ATEAGKERAA (141 aa). Residues 118-177 show a composition bias toward basic and acidic residues; that stretch reads AEKETANKKAEEASPKKEEAKEVDSKESNTDKTDKDKPAKKDEAKAEADKPATEAGKERA. Catalytic domain stretches follow at residues 176–616 and 621–1046; these read RAAT…TPEA and EAKR…PAVT. G5 domains are found at residues 1059–1138 and 1150–1230; these read NVET…GAPV and TTEV…GTMV. The interval 1244 to 1290 is disordered; that stretch reads EEKPKLEIPSQPAPSTAPAEESKVLPQDPAPVVTEKKLPETGTHDSA. Residues 1277–1286 show a composition bias toward basic and acidic residues; sequence TEKKLPETGT. Residues 1281 to 1285 carry the LPXTG sorting signal motif; that stretch reads LPETG. Position 1284 is a pentaglycyl murein peptidoglycan amidated threonine (Thr1284). Positions 1285–1312 are cleaved as a propeptide — removed by sortase; sequence GTHDSAGLVVAGLMSTLAAYGLTKRKED.

Belongs to the glycosyl hydrolase 20 family.

It is found in the secreted. The protein resides in the cell wall. The catalysed reaction is Hydrolysis of terminal non-reducing N-acetyl-D-hexosamine residues in N-acetyl-beta-D-hexosaminides.. This chain is Beta-N-acetylhexosaminidase (strH), found in Streptococcus pneumoniae serotype 4 (strain ATCC BAA-334 / TIGR4).